Here is a 295-residue protein sequence, read N- to C-terminus: Non-selective voltage-gated ion channel VDAC2 (295 aa).

The ATP site is built by K24 and K32. An N6-acetyllysine; alternate modification is found at K32. K32 is modified (N6-succinyllysine; alternate). A Glycyl lysine isopeptide (Lys-Gly) (interchain with G-Cter in ubiquitin); alternate cross-link involves residue K32. 2 beta stranded membrane passes run 38 to 47 (LVKLDVKTKS) and 51 to 59 (VEFSTSGSS). K65 participates in a covalent cross-link: Glycyl lysine isopeptide (Lys-Gly) (interchain with G-Cter in ubiquitin). Residues 66–76 (VSGTLETKYKW) traverse the membrane as a beta stranded segment. Y79 bears the Phosphotyrosine mark. Beta stranded transmembrane passes span 81 to 88 (LTFTEKWN), 92 to 101 (TLGTEIAIED), and 107 to 116 (LKLTFDTTFS). T119 is subject to Phosphothreonine. At K121 the chain carries N6-acetyllysine; alternate. K121 is covalently cross-linked (Glycyl lysine isopeptide (Lys-Gly) (interchain with G-Cter in ubiquitin); alternate). K122 is covalently cross-linked (Glycyl lysine isopeptide (Lys-Gly) (interchain with G-Cter in ubiquitin)). The next 4 beta stranded transmembrane spans lie at 123–132 (SGKIKSAYKR), 135–142 (INLGCDVD), 149–157 (AIHGSAVFG), and 162–170 (LAGYQMTFD). K173 is covalently cross-linked (Glycyl lysine isopeptide (Lys-Gly) (interchain with G-Cter in ubiquitin)). 6 consecutive transmembrane segments (beta stranded) span residues 175–187 (KLTRSNFAVGYRT), 190–197 (FQLHTNVN), 201–210 (EFGGSIYQKV), 214–223 (FDTSVNLAWT), 230–239 (RFGIAAKYQL), and 243–250 (ASISAKVN). Y237 carries the phosphotyrosine modification. At S252 the chain carries Phosphoserine. Residues 254–256 (LIG) and 272–276 (SALVD) each bind NAD(+). 2 beta stranded membrane-spanning segments follow: residues 254-263 (LIGVGYTQTL) and 266-275 (GVKLTLSALV). Residue K278 is modified to N6-acetyllysine; alternate. K278 is covalently cross-linked (Glycyl lysine isopeptide (Lys-Gly) (interchain with G-Cter in ubiquitin); alternate). The beta stranded transmembrane segment at 285 to 294 (HKLGLALELE) threads the bilayer.

Belongs to the eukaryotic mitochondrial porin family. As to quaternary structure, monomer, homodimer and higher order oligomers; formation of higher order structures is necessary for scramblase activity. Interacts with ARMC12 in a TBC1D21-dependent manner. Interacts with KLC3. Interacts with SPATA33. Interacts with PPP3CC in a SPATA33-dependent manner. In terms of processing, ubiquitinated by PRKN during mitophagy, leading to its degradation and enhancement of mitophagy. Deubiquitinated by USP30. As to expression, highly expressed in heart, kidney, brain and ascitic tumor with very low levels in liver. Expressed in the head region of epididymal sperm.

The protein resides in the mitochondrion outer membrane. The protein localises to the membrane. The enzyme catalyses chloride(in) = chloride(out). It catalyses the reaction K(+)(in) = K(+)(out). It carries out the reaction a 1,2-diacyl-sn-glycero-3-phospho-L-serine(in) = a 1,2-diacyl-sn-glycero-3-phospho-L-serine(out). The catalysed reaction is a 1,2-diacyl-sn-glycero-3-phosphocholine(in) = a 1,2-diacyl-sn-glycero-3-phosphocholine(out). The enzyme catalyses a 1,2-diacyl-sn-glycero-3-phospho-(1D-myo-inositol)(in) = a 1,2-diacyl-sn-glycero-3-phospho-(1D-myo-inositol)(out). Functionally, non-selective voltage-gated ion channel that mediates the transport of anions and cations through the mitochondrion outer membrane and plasma membrane. The channel adopts an open conformation at zero mV and a closed conformation at both positive and negative potentials. There are two populations of channels; the main that functions in a lower open-state conductance with lower ion selectivity, that switch, in a voltage-dependent manner, from the open to a low-conducting 'closed' state and the other that has a normal ion selectivity in the typical high conductance, 'open' state. Binds various lipids, including the sphingolipid ceramide, the phospholipid phosphatidylcholine, and the sterols cholesterol and oxysterol. Binding of ceramide promotes the mitochondrial outer membrane permeabilization (MOMP) apoptotic pathway. In terms of biological role, catalyzes the scrambling of phospholipids across the outer mitochondrial membrane; the mechanism is unrelated to channel activity and is capable of translocating both anionic and zwitterionic phospholipids. The chain is Non-selective voltage-gated ion channel VDAC2 from Rattus norvegicus (Rat).